A 33-amino-acid polypeptide reads, in one-letter code: Non-specific lipid-transfer protein (33 aa).

A disulfide bridge connects residues C14 and C29.

The protein belongs to the plant LTP family. In terms of assembly, dimer.

In terms of biological role, plant non-specific lipid-transfer proteins transfer phospholipids as well as galactolipids across membranes. May play a role in wax or cutin deposition in the cell walls of expanding epidermal cells and certain secretory tissues. Has antibacterial activity against Gram-positive bacteria S.aureus and S.epidermidis and blocks biofilm formation. In a mouse model, also protects against bacterial sepsis and has an anti-inflammatory effect. Exhibits antinociceptive activity upon oral or intraperitoneal application in mice. The chain is Non-specific lipid-transfer protein from Morinda citrifolia (Indian mulberry).